Reading from the N-terminus, the 630-residue chain is Molybdenum cofactor biosynthesis protein 1 (630 aa).

A Radical SAM core domain is found at 61-298; sequence RFNRHHTYLR…SKTYHVPGFK (238 aa). Arginine 70 provides a ligand contact to GTP. Positions 77 and 81 each coordinate [4Fe-4S] cluster. Residue tyrosine 83 participates in S-adenosyl-L-methionine binding. Cysteine 84 is a binding site for [4Fe-4S] cluster. Arginine 120 contacts GTP. Glycine 124 serves as a coordination point for S-adenosyl-L-methionine. Threonine 151 provides a ligand contact to GTP. Serine 175 serves as a coordination point for S-adenosyl-L-methionine. Residue lysine 212 participates in GTP binding. S-adenosyl-L-methionine is bound at residue methionine 246. Residues cysteine 312 and cysteine 315 each contribute to the [4Fe-4S] cluster site. 317–319 lines the GTP pocket; sequence RLR. [4Fe-4S] cluster is bound at residue cysteine 329. A molybdenum cofactor biosynthesis protein C region spans residues 402–629; sequence KEVKNYLLKL…GGKSSSPQIT (228 aa). Aspartate 599 (for molybdenum cofactor biosynthesis protein C activity) is an active-site residue.

This sequence in the C-terminal section; belongs to the MoaC family. It in the N-terminal section; belongs to the radical SAM superfamily. MoaA family. Isoform mocs1a and isoform mocs1b probably form a heterooligomer. It depends on [4Fe-4S] cluster as a cofactor.

It catalyses the reaction GTP + AH2 + S-adenosyl-L-methionine = (8S)-3',8-cyclo-7,8-dihydroguanosine 5'-triphosphate + 5'-deoxyadenosine + L-methionine + A + H(+). The catalysed reaction is (8S)-3',8-cyclo-7,8-dihydroguanosine 5'-triphosphate = cyclic pyranopterin phosphate + diphosphate. It participates in cofactor biosynthesis; molybdopterin biosynthesis. In terms of biological role, isoform mocs1a and isoform mocs1b probably form a complex that catalyzes the conversion of 5'-GTP to cyclic pyranopterin monophosphate (cPMP). mocs1a catalyzes the cyclization of GTP to (8S)-3',8-cyclo-7,8-dihydroguanosine 5'-triphosphate and mocs1b catalyzes the subsequent conversion of (8S)-3',8-cyclo-7,8-dihydroguanosine 5'-triphosphate to cPMP. This is Molybdenum cofactor biosynthesis protein 1 (mocs1) from Dictyostelium discoideum (Social amoeba).